A 173-amino-acid polypeptide reads, in one-letter code: MKSKVIVDELTMKRAITRITYEIIERNKQLDNVVLVGIKTRGVYLARRIQERLEQLESLHLAVGELDTKPFRDDMRVEEDTTSMPVDITGKDIILVDDVLYTGRTIRAAIDNLVSLGRPGRVSLAVLVDRGHRELPIRADYVGKNIPTSKTEEIVVEVVEVDGQDRISIVDPG.

A PRPP-binding motif is present at residues 93–105 (IILVDDVLYTGRT).

It belongs to the purine/pyrimidine phosphoribosyltransferase family. PyrR subfamily. In terms of assembly, homodimer and homohexamer; in equilibrium.

The catalysed reaction is UMP + diphosphate = 5-phospho-alpha-D-ribose 1-diphosphate + uracil. Functionally, regulates transcriptional attenuation of the pyrimidine nucleotide (pyr) operon by binding in a uridine-dependent manner to specific sites on pyr mRNA. This disrupts an antiterminator hairpin in the RNA and favors formation of a downstream transcription terminator, leading to a reduced expression of downstream genes. Also displays a weak uracil phosphoribosyltransferase activity which is not physiologically significant. The polypeptide is Bifunctional protein PyrR (Streptococcus equi subsp. zooepidemicus (strain H70)).